Consider the following 707-residue polypeptide: MSSALRSRARSASLGTTTEGWDPPPLRRPSRARRRQWMREAAQAAAQAAVQAAQAAAAQVAQAHVDEDEVVDLMADEAGGGVTTLTTLSSVSTTTVLGHATFSACVRNDVMRDGEKEDAASDKENLRRPVVPSTSSRGSAASGDGYHGLRCRETSAMWSFEYDRDGDVTSVRRALFTGGSDPSDSVSGVRGGRKRPLRPPLVSLARTPLCRRRVGGVDAVLEENDVELRAESQDSAVASGPGRVPQPLSGSSGEESATAVEADSTSHDDVHCTCSNDQIITTSIRGLTCDPRMFLRLTHPELCELSISYLLVYVPKEDDFCHKICYAVDMSDESYRLGQGSFGEVWPLDRYRVVKVARKHSETVLTVWMSGLIRTRAAGEQQQPPSLVGTGVHRGLLTATGCCLLHNVTVHRRFHTDMFHHDQWKLACIDSYRRAFCTLADAIKFLNHQCRVCHFDITPMNVLIDVNPHNPSEIVRAALCDYSLSEPYPDYNERCVAVFQETGTARRIPNCSHRLRECYHPAFRPMPLQKLLICDPHARFPVAGLRRYCMSELSALGNVLGFCLMRLLDRRGLDEVRMGTEALLFKHAGAACRALENGKLTHCSDACLLILAAQMSYGACLLGEHGAALVSHTLRFVEAKMSSCRVRAFRRFYHECSQTMLHEYVRKNVERLLATSDGLYLYNAFRRTTSIICEEDLDGDCRQLFPE.

Over residues 1 to 14 the composition is skewed to low complexity; the sequence is MSSALRSRARSASL. Disordered regions lie at residues 1 to 32, 115 to 146, 176 to 199, and 231 to 264; these read MSSA…PSRA, EKED…GDGY, FTGG…PLRP, and ESQD…EADS. The segment covering 115–127 has biased composition (basic and acidic residues); it reads EKEDAASDKENLR. The span at 178–188 shows a compositional bias: low complexity; it reads GGSDPSDSVSG. ATP-binding positions include 337–345 and lysine 359; that span reads LGQGSFGEV. The active-site Proton acceptor is aspartate 456.

The protein belongs to the protein kinase superfamily. Tyr protein kinase family. HCMV ganciclovir subfamily. Interacts with UL83. Post-translationally, autophosphorylates on serine and threonine residues.

Its subcellular location is the virion. The enzyme catalyses L-seryl-[protein] + ATP = O-phospho-L-seryl-[protein] + ADP + H(+). The catalysed reaction is L-threonyl-[protein] + ATP = O-phospho-L-threonyl-[protein] + ADP + H(+). In terms of biological role, serine/threonine protein kinase that plays important roles in several processes including nuclear viral egress, viral replication or regulation of host cell cycle progression. Participates in the acquisition of tegument during virion morphogenesis in the nucleus. Redistributes the host nuclear lamina by phosphorylating cellular Lamins-A/C. Plays a role in viral DNA synthesis by phosphorylating the DNA polymerase processivity factor UL44. Stimulates host cell cycle to support viral DNA synthesis by phosphorylating host retinoblastoma/RB1 protein. Additional substrates have been identified including host EF1D or H2B. Also phosphorylates host SAMHD1 and thereby counteracts its antiviral effect by reducing its dNTP hydrolase activity. This chain is Serine/threonine protein kinase UL97 (UL97), found in Human cytomegalovirus (strain Towne) (HHV-5).